A 579-amino-acid chain; its full sequence is Arginine--tRNA ligase (579 aa).

A 'HIGH' region motif is present at residues 123–133 (PNLAKEMHVGH).

It belongs to the class-I aminoacyl-tRNA synthetase family. As to quaternary structure, monomer.

Its subcellular location is the cytoplasm. It catalyses the reaction tRNA(Arg) + L-arginine + ATP = L-arginyl-tRNA(Arg) + AMP + diphosphate. The sequence is that of Arginine--tRNA ligase from Saccharophagus degradans (strain 2-40 / ATCC 43961 / DSM 17024).